Reading from the N-terminus, the 270-residue chain is Sugar phosphatase YidA (270 aa).

The Nucleophile role is filled by Asp9. Asp9 contacts Mg(2+). Met10 is a phosphate binding site. Asp11 contacts Mg(2+). Phosphate-binding positions include 43–44 (TG) and Lys197. Asp220 lines the Mg(2+) pocket. Asn223 provides a ligand contact to phosphate.

The protein belongs to the HAD-like hydrolase superfamily. Cof family. In terms of assembly, homodimer. Requires Mg(2+) as cofactor.

The catalysed reaction is sugar phosphate + H2O = sugar + phosphate.. Its function is as follows. Catalyzes the dephosphorylation of different sugar phosphates. The protein is Sugar phosphatase YidA (yidA) of Escherichia coli O6:H1 (strain CFT073 / ATCC 700928 / UPEC).